A 181-amino-acid polypeptide reads, in one-letter code: UPF0301 protein COXBURSA331_A2219 (181 aa).

This sequence belongs to the UPF0301 (AlgH) family.

This Coxiella burnetii (strain RSA 331 / Henzerling II) protein is UPF0301 protein COXBURSA331_A2219.